Here is a 264-residue protein sequence, read N- to C-terminus: Acyl-[acyl-carrier-protein]--UDP-N-acetylglucosamine O-acyltransferase (264 aa).

This sequence belongs to the transferase hexapeptide repeat family. LpxA subfamily. In terms of assembly, homotrimer.

The protein resides in the cytoplasm. The enzyme catalyses a (3R)-hydroxyacyl-[ACP] + UDP-N-acetyl-alpha-D-glucosamine = a UDP-3-O-[(3R)-3-hydroxyacyl]-N-acetyl-alpha-D-glucosamine + holo-[ACP]. The protein operates within glycolipid biosynthesis; lipid IV(A) biosynthesis; lipid IV(A) from (3R)-3-hydroxytetradecanoyl-[acyl-carrier-protein] and UDP-N-acetyl-alpha-D-glucosamine: step 1/6. Involved in the biosynthesis of lipid A, a phosphorylated glycolipid that anchors the lipopolysaccharide to the outer membrane of the cell. This Actinobacillus pleuropneumoniae serotype 7 (strain AP76) protein is Acyl-[acyl-carrier-protein]--UDP-N-acetylglucosamine O-acyltransferase.